We begin with the raw amino-acid sequence, 274 residues long: 2,3,4,5-tetrahydropyridine-2,6-dicarboxylate N-succinyltransferase (274 aa).

Residues Arg106 and Asp143 each contribute to the substrate site.

It belongs to the transferase hexapeptide repeat family. Homotrimer.

Its subcellular location is the cytoplasm. It carries out the reaction (S)-2,3,4,5-tetrahydrodipicolinate + succinyl-CoA + H2O = (S)-2-succinylamino-6-oxoheptanedioate + CoA. The protein operates within amino-acid biosynthesis; L-lysine biosynthesis via DAP pathway; LL-2,6-diaminopimelate from (S)-tetrahydrodipicolinate (succinylase route): step 1/3. This is 2,3,4,5-tetrahydropyridine-2,6-dicarboxylate N-succinyltransferase from Rickettsia rickettsii (strain Sheila Smith).